The sequence spans 139 residues: D-ribose pyranase (139 aa).

Residue H20 is the Proton donor of the active site. Substrate-binding positions include D28, H106, and 128–130 (YAN).

It belongs to the RbsD / FucU family. RbsD subfamily. As to quaternary structure, homodecamer.

It localises to the cytoplasm. The catalysed reaction is beta-D-ribopyranose = beta-D-ribofuranose. It functions in the pathway carbohydrate metabolism; D-ribose degradation; D-ribose 5-phosphate from beta-D-ribopyranose: step 1/2. Catalyzes the interconversion of beta-pyran and beta-furan forms of D-ribose. The protein is D-ribose pyranase of Vibrio cholerae serotype O1 (strain ATCC 39541 / Classical Ogawa 395 / O395).